Here is a 322-residue protein sequence, read N- to C-terminus: Delta-aminolevulinic acid dehydratase (322 aa).

Zn(2+)-binding residues include cysteine 120, cysteine 122, and cysteine 130. Catalysis depends on lysine 195, which acts as the Schiff-base intermediate with substrate. 2 residues coordinate 5-aminolevulinate: arginine 205 and arginine 217. Glutamate 233 contributes to the Mg(2+) binding site. The active-site Schiff-base intermediate with substrate is lysine 248. 2 residues coordinate 5-aminolevulinate: serine 274 and tyrosine 312.

This sequence belongs to the ALAD family. In terms of assembly, homooctamer. Zn(2+) is required as a cofactor.

The enzyme catalyses 2 5-aminolevulinate = porphobilinogen + 2 H2O + H(+). Its pathway is porphyrin-containing compound metabolism; protoporphyrin-IX biosynthesis; coproporphyrinogen-III from 5-aminolevulinate: step 1/4. In terms of biological role, catalyzes an early step in the biosynthesis of tetrapyrroles. Binds two molecules of 5-aminolevulinate per subunit, each at a distinct site, and catalyzes their condensation to form porphobilinogen. This is Delta-aminolevulinic acid dehydratase (hemB) from Archaeoglobus fulgidus (strain ATCC 49558 / DSM 4304 / JCM 9628 / NBRC 100126 / VC-16).